The primary structure comprises 24 residues: Brevinin-1BYa (24 aa).

An intrachain disulfide couples cysteine 18 to cysteine 24.

In terms of tissue distribution, expressed by the skin glands.

It localises to the secreted. In terms of biological role, antibacterial activity against Gram-positive bacterium S.aureus and Gram-negative bacterium E.coli. High antifungal activity against C.albicans and a strong hemolytic activity. The chain is Brevinin-1BYa from Rana boylii (Foothill yellow-legged frog).